The following is a 451-amino-acid chain: Tubulin alpha-1B chain (451 aa).

Positions M1 to C4 match the MREC motif motif. Residues G10, Q11, A12, and Q15 each coordinate GTP. An N6,N6,N6-trimethyllysine; alternate modification is found at K40. K40 carries the post-translational modification N6-acetyllysine; alternate. A Phosphoserine modification is found at S48. GTP-binding residues include E71, A99, S140, G143, G144, T145, G146, T179, E183, N206, Y224, and N228. Mg(2+) is bound at residue E71. At S232 the chain carries Phosphoserine. L252 contributes to the GTP binding site. Residue E254 is part of the active site. Y282 is subject to 3'-nitrotyrosine. Residue K326 forms a Glycyl lysine isopeptide (Lys-Gly) (interchain with G-Cter in ubiquitin) linkage. Residue R339 is modified to Omega-N-methylarginine. K370 participates in a covalent cross-link: Glycyl lysine isopeptide (Lys-Gly) (interchain with G-Cter in ubiquitin). Phosphoserine is present on S439. E443 and E445 each carry 5-glutamyl polyglutamate. Y451 carries the post-translational modification 3'-nitrotyrosine.

Belongs to the tubulin family. As to quaternary structure, heterodimer of alpha- and beta-tubulin. A typical microtubule is a hollow water-filled tube with an outer diameter of 25 nm and an inner diameter of 15 nM. Alpha-beta heterodimers associate head-to-tail to form protofilaments running lengthwise along the microtubule wall with the beta-tubulin subunit facing the microtubule plus end conferring a structural polarity. Microtubules usually have 13 protofilaments but different protofilament numbers can be found in some organisms and specialized cells. Interacts with gamma-tubulin; the interaction allows microtubules to nucleate from the gamma-tubulin ring complex (gTuRC). Nascent microtubule interacts (via alpha-tubulin MREC motif) with TTC5/STRAP; this interaction may result in tubulin mRNA-targeted degradation. Component of sperm flagellar doublet microtubules. Mg(2+) serves as cofactor. In terms of processing, some glutamate residues at the C-terminus are polyglycylated, resulting in polyglycine chains on the gamma-carboxyl group. Glycylation is mainly limited to tubulin incorporated into axonemes (cilia and flagella) whereas glutamylation is prevalent in neuronal cells, centrioles, axonemes, and the mitotic spindle. Both modifications can coexist on the same protein on adjacent residues, and lowering polyglycylation levels increases polyglutamylation, and reciprocally. Cilia and flagella glycylation is required for their stability and maintenance. Flagella glycylation controls sperm motility. Some glutamate residues at the C-terminus are polyglutamylated, resulting in polyglutamate chains on the gamma-carboxyl group. Polyglutamylation plays a key role in microtubule severing by spastin (SPAST). SPAST preferentially recognizes and acts on microtubules decorated with short polyglutamate tails: severing activity by SPAST increases as the number of glutamates per tubulin rises from one to eight, but decreases beyond this glutamylation threshold. Glutamylation is also involved in cilia motility. Post-translationally, acetylation of alpha chains at Lys-40 is located inside the microtubule lumen. This modification has been correlated with increased microtubule stability, intracellular transport and ciliary assembly. In terms of processing, methylation of alpha chains at Lys-40 is found in mitotic microtubules and is required for normal mitosis and cytokinesis contributing to genomic stability. Nitration of Tyr-451 is irreversible and interferes with normal dynein intracellular distribution. Post-translationally, undergoes a tyrosination/detyrosination cycle, the cyclic removal and re-addition of a C-terminal tyrosine residue by the enzymes tubulin tyrosine carboxypeptidase (MATCAP1, VASH1 or VASH2) and tubulin tyrosine ligase (TTL), respectively. In terms of processing, tyrosination promotes microtubule interaction with CAP-Gly domain-containing proteins such as CLIP1, CLIP2 and DCTN1. Tyrosination regulates the initiation of dynein-dynactin motility via interaction with DCTN1, which brings the dynein-dynactin complex into contact with microtubules. In neurons, tyrosinated tubulins mediate the initiation of retrograde vesicle transport. Detyrosination is involved in metaphase plate congression by guiding chromosomes during mitosis: detyrosination promotes interaction with CENPE, promoting pole-proximal transport of chromosomes toward the equator. Detyrosination increases microtubules-dependent mechanotransduction in dystrophic cardiac and skeletal muscle. In cardiomyocytes, detyrosinated microtubules are required to resist to contractile compression during contraction: detyrosination promotes association with desmin (DES) at force-generating sarcomeres, leading to buckled microtubules and mechanical resistance to contraction.

The protein localises to the cytoplasm. Its subcellular location is the cytoskeleton. The catalysed reaction is GTP + H2O = GDP + phosphate + H(+). Tubulin is the major constituent of microtubules, protein filaments consisting of alpha- and beta-tubulin heterodimers. Microtubules grow by the addition of GTP-tubulin dimers to the microtubule end, where a stabilizing cap forms. Below the cap, tubulin dimers are in GDP-bound state, owing to GTPase activity of alpha-tubulin. This chain is Tubulin alpha-1B chain (TUBA1B), found in Pan troglodytes (Chimpanzee).